A 133-amino-acid polypeptide reads, in one-letter code: Small ribosomal subunit protein uS8 (133 aa).

This sequence belongs to the universal ribosomal protein uS8 family. As to quaternary structure, part of the 30S ribosomal subunit. Contacts proteins S5 and S12.

Its function is as follows. One of the primary rRNA binding proteins, it binds directly to 16S rRNA central domain where it helps coordinate assembly of the platform of the 30S subunit. This is Small ribosomal subunit protein uS8 from Synechococcus elongatus (strain ATCC 33912 / PCC 7942 / FACHB-805) (Anacystis nidulans R2).